A 462-amino-acid polypeptide reads, in one-letter code: FAD-dependent monooxygenase opaC (462 aa).

An N-linked (GlcNAc...) asparagine glycan is attached at asparagine 10. Residues 14 to 34 traverse the membrane as a helical segment; it reads ITVIIIGLGIGGLTAAISCHL. Aspartate 43 is a binding site for FAD. A glycan (N-linked (GlcNAc...) asparagine) is linked at asparagine 60. FAD is bound at residue arginine 115. Arginine 193 is an active-site residue. The FAD site is built by aspartate 322 and alanine 335.

The protein belongs to the paxM FAD-dependent monooxygenase family. Requires FAD as cofactor.

The protein localises to the membrane. It participates in secondary metabolite biosynthesis. Its function is as follows. FAD-dependent monooxygenase; part of the gene cluster that mediates the biosynthesis of oxepinamides, derivatives of anthranilyl-containing tripeptides that share an oxepin ring and a fused pyrimidinone moiety. The nonribosomal peptide synthetase (NRPS) opaA assembles the quinazolinone core with D-Phe incorporation. The first adenylation domain (A1) of opaA loads and activates anthranilic acid whereas the second A domain (A2) is for activating of L-Phe, which is then converted to D-form by the E domain. The third A domain (A3) is responsible for L-Ile activation and the terminal condensation domain C3 for cyclization and releasing the NRPS product protuboxepin K. The cytochrome P450 monooxygenase opaB then catalyzes alone the oxepin ring formation to convert protuboxepin K into protuboxepin A. The flavoenzyme opaC installs subsequently one hydroxyl group at the oxepin ring, accompanied by double bond migration, to form 15-epi-oxepinamide E. The epimerase opaE changes the D-Phe residue back to L-form, leading to oxepinamide E, which is further methylated at the hydroxyl group at C-12 by the O-methyltransferase OpaF to yield oxepinamide F. This Aspergillus ustus protein is FAD-dependent monooxygenase opaC.